The chain runs to 365 residues: Peptide chain release factor 2 (365 aa).

N5-methylglutamine is present on glutamine 251.

The protein belongs to the prokaryotic/mitochondrial release factor family. In terms of processing, methylated by PrmC. Methylation increases the termination efficiency of RF2.

The protein resides in the cytoplasm. Its function is as follows. Peptide chain release factor 2 directs the termination of translation in response to the peptide chain termination codons UGA and UAA. In Campylobacter jejuni (strain RM1221), this protein is Peptide chain release factor 2.